Consider the following 143-residue polypeptide: Na(+)/H(+) antiporter subunit B (143 aa).

4 helical membrane passes run 9-31, 36-58, 71-93, and 117-139; these read LILQTATKLVSFIILLFSFYLFL, APGGGFVGGLITSSSIVLLLLAY, FIYVAGAGLLLAVLTGVGSFVFG, and ATIFDLGVYLVVVGITMTIIQTI.

Belongs to the CPA3 antiporters (TC 2.A.63) subunit B family. Forms a heterooligomeric complex that consists of seven subunits: MrpA, MrpB, MrpC, MrpD, MrpE, MrpF and MrpG.

It localises to the cell membrane. Its function is as follows. Mrp complex is a Na(+)/H(+) antiporter that is considered to be the major Na(+) excretion system in B.subtilis. Has a major role in Na(+) resistance and a minor role in Na(+)- and K(+)-dependent pH homeostasis as compared to TetB. MrpA may be the actual Na(+)/H(+) antiporter, although the six other Mrp proteins are all required for Na(+)/H(+) antiport activity and Na(+) resistance. MrpA is required for initiation of sporulation when external Na(+) concentration increases. Also transports Li(+) but not K(+), Ca(2+) or Mg(2+). The polypeptide is Na(+)/H(+) antiporter subunit B (mrpB) (Bacillus subtilis (strain 168)).